The following is a 324-amino-acid chain: MASPTMKLNNGLDMPQVGFGLWKVENSVCADVVYNAIKAGYRLFDGACDYGNEVECGQGVKRAIDEGLVKREELFIVSKLWNTFHDGERVEPIVKKQLADWGIEYFDLYLIHFPVALEYVDPSVRYPPGWHYDDAGTEIRPSKASIQETWTAMEKLVDAGLSKAIGVSNFQAQLLYDMLRYARIRPATLQIEHHPYLVQQRLIEACKTEGIVVTAYSSFGPASFKEFNMEHAEALTPLLEEPTIVKLAEKYGKDPGQVLLRWATQRGLAVIPKSSREKTMKSNFEAVGWDMEDSDIKTISALDKGIRFNQPANYFSTDKLWIFG.

Residue Tyr-50 is the Proton donor of the active site. Residue His-112 coordinates substrate. Residues 168-169 (SN), 217-226 (SSFGPASFKE), and 273-283 (KSSREKTMKSN) each bind NAD(+).

Belongs to the aldo/keto reductase family.

It catalyses the reaction xylitol + NAD(+) = D-xylose + NADH + H(+). The catalysed reaction is xylitol + NADP(+) = D-xylose + NADPH + H(+). The protein operates within carbohydrate metabolism; D-xylose degradation. Functionally, catalyzes the initial reaction in the xylose utilization pathway by reducing D-xylose into xylitol. Xylose is a major component of hemicelluloses such as xylan. Most fungi utilize D-xylose via three enzymatic reactions, xylose reductase (XR), xylitol dehydrogenase (XDH), and xylulokinase, to form xylulose 5-phosphate, which enters pentose phosphate pathway. In Pyricularia oryzae (strain 70-15 / ATCC MYA-4617 / FGSC 8958) (Rice blast fungus), this protein is NAD(P)H-dependent D-xylose reductase XYR1 (XYR1).